The primary structure comprises 230 residues: Ribonuclease 3 (230 aa).

Positions 10–133 constitute an RNase III domain; it reads DPRLLSRIGY…IIGAIYLDSS (124 aa). Residue Glu46 coordinates Mg(2+). Asp50 is an active-site residue. Residues Asp119 and Glu122 each contribute to the Mg(2+) site. The active site involves Glu122. In terms of domain architecture, DRBM spans 161–230; it reads DPKSRLQEYL…AAEILKLLEQ (70 aa).

This sequence belongs to the ribonuclease III family. In terms of assembly, homodimer. The cofactor is Mg(2+).

The protein resides in the cytoplasm. The catalysed reaction is Endonucleolytic cleavage to 5'-phosphomonoester.. Its function is as follows. Digests double-stranded RNA. Involved in the processing of primary rRNA transcript to yield the immediate precursors to the large and small rRNAs (23S and 16S). Processes some mRNAs, and tRNAs when they are encoded in the rRNA operon. Processes pre-crRNA and tracrRNA of type II CRISPR loci if present in the organism. The sequence is that of Ribonuclease 3 (rnc) from Acinetobacter baumannii (strain AB307-0294).